Consider the following 749-residue polypeptide: Dynamin-1-like protein (749 aa).

Residue Met-1 is modified to N-acetylmethionine. Positions 22–315 (IIQLPQIVVV…LMHHIRDCLP (294 aa)) constitute a Dynamin-type G domain. The G1 motif stretch occupies residues 32–39 (GTQSSGKS). 32 to 40 (GTQSSGKSS) serves as a coordination point for GTP. The segment at 58 to 60 (VTR) is G2 motif. The disordered stretch occupies residues 74 to 93 (DKRKTTGEENDPATWKNSRH). Residues 159–162 (DLPG) are G3 motif. Residues 228–231 (TKLD) are G4 motif. Residues 228-234 (TKLDLMD) and 259-262 (NRSQ) each bind GTP. A G5 motif region spans residues 258–261 (VNRS). Positions 357-502 (YCNTIEGTAK…NEMVHNLVAI (146 aa)) are middle domain. Residues 461 to 698 (NYSTQELLRF…NHVKDTLQSE (238 aa)) are interaction with GSK3B. Positions 515 to 582 (ADACGLMNNN…IQESRRETKN (68 aa)) are b domain. The interval 536–604 (ELPSAVSRDK…QEPTTGNWRG (69 aa)) is disordered. A Phosphoserine modification is found at Ser-542. Glycyl lysine isopeptide (Lys-Gly) (interchain with G-Cter in SUMO) cross-links involve residues Lys-545 and Lys-548. Residues 550-567 (PSALAPASQEPSPAASAE) are compositionally biased toward low complexity. Ser-561 carries the phosphoserine modification. The segment covering 568 to 581 (ADGKLIQESRRETK) has biased composition (basic and acidic residues). Residues Lys-571 and Lys-581 each participate in a glycyl lysine isopeptide (Lys-Gly) (interchain with G-Cter in SUMO) cross-link. Thr-598 and Thr-599 each carry an O-linked (GlcNAc) threonine glycan. Lys-607 is covalently cross-linked (Glycyl lysine isopeptide (Lys-Gly) (interchain with G-Cter in SUMO)). Position 610 is an N6-acetyllysine; alternate (Lys-610). Residue Lys-610 forms a Glycyl lysine isopeptide (Lys-Gly) (interchain with G-Cter in SUMO); alternate linkage. Lys-619 participates in a covalent cross-link: Glycyl lysine isopeptide (Lys-Gly) (interchain with G-Cter in SUMO). Position 620 is a phosphoserine (Ser-620). Lys-621 participates in a covalent cross-link: Glycyl lysine isopeptide (Lys-Gly) (interchain with G-Cter in SUMO). Residue Ser-629 is modified to Phosphoserine; by CDK1 and PINK1. Ser-650 bears the Phosphoserine; by CAMK1 and PKA mark. Cys-657 is modified (S-nitrosocysteine). The GED domain maps to 657 to 748 (CEVIERLIKS…IIAEIRETHL (92 aa)). Residues 667 to 681 (YFLIVRKNIQDSVPK) are important for homodimerization.

The protein belongs to the TRAFAC class dynamin-like GTPase superfamily. Dynamin/Fzo/YdjA family. As to quaternary structure, homotetramer; dimerizes through the N-terminal GTP-middle region of one molecule binding to the GED domain of another DNM1L molecule. Oligomerizes in a GTP-dependent manner to form membrane-associated tubules with a spiral pattern. Interacts with GSK3B and MARCHF5. Interacts (via the GTPase and B domains) with UBE2I; the interaction promotes sumoylation of DNM1L, mainly in its B domain. Interacts with PPP3CA; the interaction dephosphorylates DNM1L and regulates its transition to mitochondria. Interacts with BCL2L1 isoform BCL-X(L) and CLTA; DNM1L and BCL2L1 isoform BCL-X(L) may form a complex in synaptic vesicles that also contains clathrin and MFF. Interacts with MFF; the interaction is inhinited by C11orf65/MFI. Interacts with FIS1. Interacts with MIEF2 and MIEF1; GTP-dependent, regulates GTP hydrolysis and DNM1L oligomerization. Interacts with PGAM5; this interaction leads to dephosphorylation at Ser-656 and activation of GTPase activity and eventually to mitochondria fragmentation. Interacts with RALBP1; during mitosis, recruits DNM1L to the mitochondrion and mediates its activation by the mitotic kinase cyclin B-CDK1. Phosphorylation/dephosphorylation events on two sites near the GED domain regulate mitochondrial fission. Phosphorylation on Ser-650 by CAMK1 and PKA inhibits the GTPase activity, leading to a defect in mitochondrial fission promoting mitochondrial elongation. Dephosphorylated on this site by PPP3CA which promotes mitochondrial fission. Phosphorylation on Ser-629 by CDK1 and PINK1 activates the GTPase activity and promotes mitochondrial fission. Phosphorylated in a circadian manner at Ser-650. Post-translationally, sumoylated on various lysine residues within the B domain, probably by MUL1. Sumoylation positively regulates mitochondrial fission. Desumoylated by SENP5 during G2/M transition of mitosis. Appears to be linked to its catalytic activity. In terms of processing, S-nitrosylation increases DNM1L dimerization, mitochondrial fission and causes neuronal damage. O-GlcNAcylation augments the level of the GTP-bound active form of DNM1L and induces translocation from the cytoplasm to mitochondria in cardiomyocytes. It also decreases phosphorylation at Ser-650. Post-translationally, ubiquitination by MARCHF5 affects mitochondrial morphology.

Its subcellular location is the cytoplasm. The protein resides in the cytosol. The protein localises to the golgi apparatus. It is found in the endomembrane system. It localises to the mitochondrion outer membrane. Its subcellular location is the peroxisome. The protein resides in the membrane. The protein localises to the clathrin-coated pit. It is found in the cytoplasmic vesicle. It localises to the secretory vesicle. Its subcellular location is the synaptic vesicle membrane. The catalysed reaction is GTP + H2O = GDP + phosphate + H(+). Functionally, functions in mitochondrial and peroxisomal division. Mediates membrane fission through oligomerization into membrane-associated tubular structures that wrap around the scission site to constrict and sever the mitochondrial membrane through a GTP hydrolysis-dependent mechanism. The specific recruitment at scission sites is mediated by membrane receptors like MFF, MIEF1 and MIEF2 for mitochondrial membranes. While the recruitment by the membrane receptors is GTP-dependent, the following hydrolysis of GTP induces the dissociation from the receptors and allows DNM1L filaments to curl into closed rings that are probably sufficient to sever a double membrane. Acts downstream of PINK1 to promote mitochondrial fission in a PRKN-dependent manner. Plays an important role in mitochondrial fission during mitosis. Through its function in mitochondrial division, ensures the survival of at least some types of postmitotic neurons, including Purkinje cells, by suppressing oxidative damage. Required for normal brain development, including that of cerebellum. Facilitates developmentally regulated apoptosis during neural tube formation. Required for a normal rate of cytochrome c release and caspase activation during apoptosis; this requirement may depend upon the cell type and the physiological apoptotic cues. Required for formation of endocytic vesicles. Proposed to regulate synaptic vesicle membrane dynamics through association with BCL2L1 isoform Bcl-X(L) which stimulates its GTPase activity in synaptic vesicles; the function may require its recruitment by MFF to clathrin-containing vesicles. Required for programmed necrosis execution. Rhythmic control of its activity following phosphorylation at Ser-650 is essential for the circadian control of mitochondrial ATP production. In Bos taurus (Bovine), this protein is Dynamin-1-like protein.